The chain runs to 84 residues: Large ribosomal subunit protein bL27 (84 aa).

Polar residues predominate over residues 1–11 (MATTKAGGSTK). Residues 1-20 (MATTKAGGSTKNGRDSHSKR) are disordered.

This sequence belongs to the bacterial ribosomal protein bL27 family.

This Mycoplasmopsis synoviae (strain 53) (Mycoplasma synoviae) protein is Large ribosomal subunit protein bL27.